The primary structure comprises 325 residues: Probable cell division protein WhiA (325 aa).

A DNA-binding region (H-T-H motif) is located at residues serine 280–lysine 313.

It belongs to the WhiA family.

In terms of biological role, involved in cell division and chromosome segregation. The protein is Probable cell division protein WhiA of Caldicellulosiruptor bescii (strain ATCC BAA-1888 / DSM 6725 / KCTC 15123 / Z-1320) (Anaerocellum thermophilum).